We begin with the raw amino-acid sequence, 234 residues long: Glucosamine-6-phosphate deaminase (234 aa).

Residue Asp62 is the Proton acceptor; for enolization step of the active site. Asn128 (for ring-opening step) is an active-site residue. The Proton acceptor; for ring-opening step role is filled by His130. The active-site For ring-opening step is Glu135.

This sequence belongs to the glucosamine/galactosamine-6-phosphate isomerase family. NagB subfamily.

It catalyses the reaction alpha-D-glucosamine 6-phosphate + H2O = beta-D-fructose 6-phosphate + NH4(+). It functions in the pathway amino-sugar metabolism; N-acetylneuraminate degradation; D-fructose 6-phosphate from N-acetylneuraminate: step 5/5. Its function is as follows. Catalyzes the reversible isomerization-deamination of glucosamine 6-phosphate (GlcN6P) to form fructose 6-phosphate (Fru6P) and ammonium ion. This Ligilactobacillus salivarius (strain UCC118) (Lactobacillus salivarius) protein is Glucosamine-6-phosphate deaminase.